The sequence spans 356 residues: Alanine racemase, catabolic (356 aa).

Lys35 acts as the Proton acceptor; specific for D-alanine in catalysis. Residue Lys35 is modified to N6-(pyridoxal phosphate)lysine. Arg130 provides a ligand contact to substrate. The active-site Proton acceptor; specific for L-alanine is Tyr253. Met301 lines the substrate pocket.

The protein belongs to the alanine racemase family. The cofactor is pyridoxal 5'-phosphate.

It catalyses the reaction L-alanine = D-alanine. Isomerizes L-alanine to D-alanine which is then oxidized to pyruvate by DadA. This Klebsiella aerogenes (Enterobacter aerogenes) protein is Alanine racemase, catabolic (dadB).